The chain runs to 109 residues: Nucleoid-associated protein CC_0268 (109 aa).

The protein belongs to the YbaB/EbfC family. As to quaternary structure, homodimer.

The protein resides in the cytoplasm. It is found in the nucleoid. Binds to DNA and alters its conformation. May be involved in regulation of gene expression, nucleoid organization and DNA protection. This is Nucleoid-associated protein CC_0268 from Caulobacter vibrioides (strain ATCC 19089 / CIP 103742 / CB 15) (Caulobacter crescentus).